The following is a 194-amino-acid chain: Cell division protein SepF (194 aa).

2 disordered regions span residues 35–54 (DHRS…DSSP) and 159–194 (SAPS…AGGL).

Belongs to the SepF family. As to quaternary structure, homodimer. Interacts with FtsZ.

It is found in the cytoplasm. Its function is as follows. Cell division protein that is part of the divisome complex and is recruited early to the Z-ring. Probably stimulates Z-ring formation, perhaps through the cross-linking of FtsZ protofilaments. Its function overlaps with FtsA. This Prochlorococcus marinus (strain MIT 9313) protein is Cell division protein SepF.